Consider the following 200-residue polypeptide: Nascent polypeptide-associated complex subunit alpha (200 aa).

The span at 1–19 shows a compositional bias: basic and acidic residues; it reads MADPRIEELPDEETKKPTV. Disordered stretches follow at residues 1–52 and 120–165; these read MADP…SRNE and QQLA…EDKD. Positions 20-34 are enriched in acidic residues; that stretch reads EELDESSDEESDAEA. In terms of domain architecture, NAC-A/B spans 49 to 114; that stretch reads SRNEKKARKA…AKIEDLNASA (66 aa). A compositionally biased stretch (basic and acidic residues) spans 127–143; that stretch reads AEHDHAGHTHDHKHEAA. Residues 144-160 are compositionally biased toward acidic residues; it reads KEEEEEEDDGEEVDAEG. Positions 161–200 constitute a UBA domain; that stretch reads IEDKDIELVMTQANVSRKKAIKALKENDNDIVNSIMALSV.

The protein belongs to the NAC-alpha family. As to quaternary structure, part of the nascent polypeptide-associated complex (NAC), consisting of EGD2 and EGD1. NAC associates with ribosomes via EGD1.

It is found in the cytoplasm. The protein resides in the nucleus. Component of the nascent polypeptide-associated complex (NAC), a dynamic component of the ribosomal exit tunnel, protecting the emerging polypeptides from interaction with other cytoplasmic proteins to ensure appropriate nascent protein targeting. The NAC complex also promotes mitochondrial protein import by enhancing productive ribosome interactions with the outer mitochondrial membrane and blocks the inappropriate interaction of ribosomes translating non-secretory nascent polypeptides with translocation sites in the membrane of the endoplasmic reticulum. EGD2 may also be involved in transcription regulation. The sequence is that of Nascent polypeptide-associated complex subunit alpha (EGD2) from Chaetomium globosum (strain ATCC 6205 / CBS 148.51 / DSM 1962 / NBRC 6347 / NRRL 1970) (Soil fungus).